Consider the following 509-residue polypeptide: Methionine--tRNA ligase (509 aa).

The 'HIGH' region signature appears at 12–22; it reads YYPSGDLHLGH. The short motif at 302-306 is the 'KMSKS' region element; the sequence is KMSKS. Lys-305 is an ATP binding site.

The protein belongs to the class-I aminoacyl-tRNA synthetase family. MetG type 2B subfamily. Monomer.

The protein resides in the cytoplasm. The catalysed reaction is tRNA(Met) + L-methionine + ATP = L-methionyl-tRNA(Met) + AMP + diphosphate. Is required not only for elongation of protein synthesis but also for the initiation of all mRNA translation through initiator tRNA(fMet) aminoacylation. In Mycoplasmopsis pulmonis (strain UAB CTIP) (Mycoplasma pulmonis), this protein is Methionine--tRNA ligase (metG).